We begin with the raw amino-acid sequence, 213 residues long: Orotate phosphoribosyltransferase (213 aa).

5-phospho-alpha-D-ribose 1-diphosphate is bound at residue K26. F34–F35 serves as a coordination point for orotate. 5-phospho-alpha-D-ribose 1-diphosphate contacts are provided by residues Y72–K73, R99, K100, K103, H105, and D124–A132. The orotate site is built by T128 and R156.

The protein belongs to the purine/pyrimidine phosphoribosyltransferase family. PyrE subfamily. As to quaternary structure, homodimer. The cofactor is Mg(2+).

The catalysed reaction is orotidine 5'-phosphate + diphosphate = orotate + 5-phospho-alpha-D-ribose 1-diphosphate. It participates in pyrimidine metabolism; UMP biosynthesis via de novo pathway; UMP from orotate: step 1/2. In terms of biological role, catalyzes the transfer of a ribosyl phosphate group from 5-phosphoribose 1-diphosphate to orotate, leading to the formation of orotidine monophosphate (OMP). This Pseudomonas syringae pv. tomato (strain ATCC BAA-871 / DC3000) protein is Orotate phosphoribosyltransferase.